Reading from the N-terminus, the 224-residue chain is DeSI-like protein At4g17486 (224 aa).

The 138-residue stretch at 26–163 (TPVYLNVYDL…FCNCLLPESI (138 aa)) folds into the PPPDE domain. Catalysis depends on residues His51 and Cys125. The segment at 176–201 (EFSDEDESNSEASSVSDEEGSEQHLI) is disordered.

It belongs to the DeSI family.

This chain is DeSI-like protein At4g17486, found in Arabidopsis thaliana (Mouse-ear cress).